The primary structure comprises 642 residues: Threonine--tRNA ligase (642 aa).

The region spanning M1–T63 is the TGS domain. The segment at D242–P533 is catalytic. Residues C334, H385, and H510 each coordinate Zn(2+).

Belongs to the class-II aminoacyl-tRNA synthetase family. Homodimer. Requires Zn(2+) as cofactor.

Its subcellular location is the cytoplasm. It carries out the reaction tRNA(Thr) + L-threonine + ATP = L-threonyl-tRNA(Thr) + AMP + diphosphate + H(+). Functionally, catalyzes the attachment of threonine to tRNA(Thr) in a two-step reaction: L-threonine is first activated by ATP to form Thr-AMP and then transferred to the acceptor end of tRNA(Thr). This chain is Threonine--tRNA ligase, found in Haloarcula marismortui (strain ATCC 43049 / DSM 3752 / JCM 8966 / VKM B-1809) (Halobacterium marismortui).